Consider the following 184-residue polypeptide: UPF0398 protein BCG9842_B3730 (184 aa).

This sequence belongs to the UPF0398 family.

The chain is UPF0398 protein BCG9842_B3730 from Bacillus cereus (strain G9842).